A 431-amino-acid polypeptide reads, in one-letter code: UDP-N-acetylglucosamine 1-carboxyvinyltransferase (431 aa).

A phosphoenolpyruvate-binding site is contributed by 22–23 (KN). A UDP-N-acetyl-alpha-D-glucosamine-binding site is contributed by R93. Residue C117 is the Proton donor of the active site. C117 carries the 2-(S-cysteinyl)pyruvic acid O-phosphothioketal modification. Residues D307 and V329 each contribute to the UDP-N-acetyl-alpha-D-glucosamine site.

This sequence belongs to the EPSP synthase family. MurA subfamily.

It is found in the cytoplasm. The catalysed reaction is phosphoenolpyruvate + UDP-N-acetyl-alpha-D-glucosamine = UDP-N-acetyl-3-O-(1-carboxyvinyl)-alpha-D-glucosamine + phosphate. It participates in cell wall biogenesis; peptidoglycan biosynthesis. Cell wall formation. Adds enolpyruvyl to UDP-N-acetylglucosamine. The sequence is that of UDP-N-acetylglucosamine 1-carboxyvinyltransferase from Nitrosococcus oceani (strain ATCC 19707 / BCRC 17464 / JCM 30415 / NCIMB 11848 / C-107).